The following is a 643-amino-acid chain: uncharacterized protein (643 aa).

The helical transmembrane segment at 9–29 (IVLALLLLLLPVVCGDVSVYK) threads the bilayer.

It is found in the membrane. This is an uncharacterized protein from Methanocaldococcus jannaschii (strain ATCC 43067 / DSM 2661 / JAL-1 / JCM 10045 / NBRC 100440) (Methanococcus jannaschii).